A 425-amino-acid chain; its full sequence is Glutamyl-tRNA reductase (425 aa).

Residues 49–52 (TCNR), S107, 112–114 (EPQ), and Q118 contribute to the substrate site. C50 serves as the catalytic Nucleophile. 187–192 (GAGETI) provides a ligand contact to NADP(+).

This sequence belongs to the glutamyl-tRNA reductase family. In terms of assembly, homodimer.

It catalyses the reaction (S)-4-amino-5-oxopentanoate + tRNA(Glu) + NADP(+) = L-glutamyl-tRNA(Glu) + NADPH + H(+). It functions in the pathway porphyrin-containing compound metabolism; protoporphyrin-IX biosynthesis; 5-aminolevulinate from L-glutamyl-tRNA(Glu): step 1/2. Its function is as follows. Catalyzes the NADPH-dependent reduction of glutamyl-tRNA(Glu) to glutamate 1-semialdehyde (GSA). The protein is Glutamyl-tRNA reductase of Pseudomonas putida (strain W619).